The primary structure comprises 173 residues: 2-C-methyl-D-erythritol 2,4-cyclodiphosphate synthase (173 aa).

A divalent metal cation is bound by residues Asp17 and His19. 4-CDP-2-C-methyl-D-erythritol 2-phosphate contacts are provided by residues 17 to 19 (DVH) and 49 to 50 (HS). His57 contacts a divalent metal cation. 4-CDP-2-C-methyl-D-erythritol 2-phosphate contacts are provided by residues 76–80 (FPNTD), 147–150 (TTTE), Phe154, and Arg157.

This sequence belongs to the IspF family. In terms of assembly, homotrimer. Requires a divalent metal cation as cofactor.

The enzyme catalyses 4-CDP-2-C-methyl-D-erythritol 2-phosphate = 2-C-methyl-D-erythritol 2,4-cyclic diphosphate + CMP. It participates in isoprenoid biosynthesis; isopentenyl diphosphate biosynthesis via DXP pathway; isopentenyl diphosphate from 1-deoxy-D-xylulose 5-phosphate: step 4/6. Its function is as follows. Involved in the biosynthesis of isopentenyl diphosphate (IPP) and dimethylallyl diphosphate (DMAPP), two major building blocks of isoprenoid compounds. Catalyzes the conversion of 4-diphosphocytidyl-2-C-methyl-D-erythritol 2-phosphate (CDP-ME2P) to 2-C-methyl-D-erythritol 2,4-cyclodiphosphate (ME-CPP) with a corresponding release of cytidine 5-monophosphate (CMP). The chain is 2-C-methyl-D-erythritol 2,4-cyclodiphosphate synthase from Ehrlichia chaffeensis (strain ATCC CRL-10679 / Arkansas).